The sequence spans 140 residues: Fluoride-specific ion channel FluC 1 (140 aa).

Transmembrane regions (helical) follow at residues 4–24, 32–52, 70–90, and 99–119; these read LYLA…ASFI, FPLA…FILT, TGML…LHLL, and LLYL…GIFL. Residues G74 and T77 each contribute to the Na(+) site.

The protein belongs to the fluoride channel Fluc/FEX (TC 1.A.43) family.

It localises to the cell membrane. It catalyses the reaction fluoride(in) = fluoride(out). With respect to regulation, na(+) is not transported, but it plays an essential structural role and its presence is essential for fluoride channel function. Functionally, fluoride-specific ion channel. Important for reducing fluoride concentration in the cell, thus reducing its toxicity. This is Fluoride-specific ion channel FluC 1 from Moorella thermoacetica (strain ATCC 39073 / JCM 9320).